Here is a 400-residue protein sequence, read N- to C-terminus: Probable aspartate/prephenate aminotransferase (400 aa).

L-aspartate contacts are provided by G39, W125, and N175. K239 carries the post-translational modification N6-(pyridoxal phosphate)lysine. R375 is an L-aspartate binding site.

The protein belongs to the class-I pyridoxal-phosphate-dependent aminotransferase family. Homodimer. It depends on pyridoxal 5'-phosphate as a cofactor.

Its subcellular location is the cytoplasm. The catalysed reaction is L-aspartate + 2-oxoglutarate = oxaloacetate + L-glutamate. It carries out the reaction L-arogenate + 2-oxoglutarate = prephenate + L-glutamate. Functionally, catalyzes the reversible conversion of aspartate and 2-oxoglutarate to glutamate and oxaloacetate. Can also transaminate prephenate in the presence of glutamate. The chain is Probable aspartate/prephenate aminotransferase (aspC) from Rhizobium leguminosarum bv. phaseoli.